The following is a 1046-amino-acid chain: Suppressor of Mek1 (1046 aa).

In terms of domain architecture, WH1 spans 1–101 (MEPLRKRVKV…QDIWENILQY (101 aa)). The interval 626 to 1046 (FESPETSCNN…SSPTPSELHV (421 aa)) is disordered. A compositionally biased stretch (acidic residues) spans 665-689 (IDEEEEEAYFNRDDDSEDSDDEDEL). Positions 695 to 713 (NNNNNNNNNNKQICTNNEN) are enriched in low complexity. Positions 714–727 (NMEKNDDNIEKDNE) are enriched in basic and acidic residues. The span at 743-752 (YEDEDDEDDE) shows a compositional bias: acidic residues. Residues 753–783 (INKSVESDDIVEKHEIIDKNEKKDEIMKENN) show a composition bias toward basic and acidic residues. Residues 784-803 (DSDNDDNDNNDNDNDNDNNS) are compositionally biased toward acidic residues. Residues 804–820 (DIENKNHLNNNGNNENN) show a composition bias toward low complexity. Basic and acidic residues-rich tracts occupy residues 826–855 (VQDK…KENL) and 862–876 (EKVK…KKEN). The segment covering 889–905 (SNNSNNNNNNNNNNSNN) has biased composition (low complexity). Basic and acidic residues predominate over residues 909–935 (GDNRKTTPKRKLDYEKNESVVSKKIDK). The span at 958–995 (NNNNSNNNNNNNNNNNNNNNNNNNNNNNNNNNNNNNQN) shows a compositional bias: low complexity. The segment covering 996-1011 (DENELSSASEEEEEQL) has biased composition (acidic residues). A Nuclear localization signal motif is present at residues 1003–1022 (ASEEEEEQLENGKHIKKFKR). The span at 1028–1038 (NNSSNNSNNSS) shows a compositional bias: low complexity.

This sequence belongs to the SMEK family. As to quaternary structure, interacts with ppp4c.

It localises to the cytoplasm. It is found in the cell cortex. Its subcellular location is the nucleus. In terms of biological role, suppresses MEK1 null cell polarity, chemotaxis, and gene expression defects. Required for proper cytokinesis during vegetative growth, timely exit from the mound stage during development, and myosin II assembly. May be a regulatory subunit of serine/threonine-protein phosphatase 4 (PP4) and may control localization of PP4 to the nucleus. Involved in the regulation of some ppp4c functions, such as developmental progression, chemotaxis, expression of stress response genes and cell movement. The polypeptide is Suppressor of Mek1 (smkA) (Dictyostelium discoideum (Social amoeba)).